The primary structure comprises 260 residues: Ras-related protein Rab-32B (260 aa).

Positions 11 to 50 are disordered; it reads FDTDPDVSTDSNYNNNNNSNNNNSIISNSNNNNNNNNNNV. Over residues 21-49 the composition is skewed to low complexity; the sequence is SNYNNNNNSNNNNSIISNSNNNNNNNNNN. 66–73 provides a ligand contact to GTP; it reads GDYAVGKS. The short motif at 88 to 96 is the Effector region element; that stretch reads YKLTIGVDF. GTP-binding positions include 115–119 and 177–180; these read DIAGH and NKSD. A disordered region spans residues 231–260; sequence TNHPPKPEEDTLELTKTNGEKSDDSKSCCK. Over residues 248–260 the composition is skewed to basic and acidic residues; it reads NGEKSDDSKSCCK. Residues Cys-258 and Cys-259 are each lipidated (S-geranylgeranyl cysteine).

This sequence belongs to the small GTPase superfamily. Rab family.

In Dictyostelium discoideum (Social amoeba), this protein is Ras-related protein Rab-32B (rab32B).